Here is a 195-residue protein sequence, read N- to C-terminus: Myosin regulatory light chain, striated muscle, 25 kDa isoform (195 aa).

Basic and acidic residues predominate over residues 1–17 (AKDKEKKEKKDKKKDDA). Residues 1 to 39 (AKDKEKKEKKDKKKDDAPAEEAPAAAAAPAEEAAPTPSA) are disordered. A compositionally biased stretch (low complexity) spans 20-39 (EEAPAAAAAPAEEAAPTPSA). EF-hand domains lie at 55-90 (NQIQ…IGRE) and 124-159 (DTEG…VGDQ). Aspartate 68, aspartate 70, aspartate 72, and aspartate 79 together coordinate Ca(2+).

In terms of assembly, myosin is a hexamer of 2 heavy chains and 4 light chains.

In terms of biological role, plays an important role in regulation of muscle cell contractile activity. This is Myosin regulatory light chain, striated muscle, 25 kDa isoform from Lumbricus terrestris (Common earthworm).